We begin with the raw amino-acid sequence, 181 residues long: SecB-like chaperone Rv1957 (181 aa).

An N-acetylthreonine modification is found at Thr-2.

Belongs to the SecB-like family. In terms of assembly, homotetramer, interacts with antitoxin HigA1.

Functionally, chaperone component of an atypical, type II toxin-antitoxin chaperone (TAC) system. Prevents antitoxin HigA1 aggregation in vitro at a 1:3 chaperone:antitoxin ratio, probably also protects antitoxin HigA1 from protease. Required for neutralization of toxin HigB1 upon ectopic expression in Mycobacterium marinum or E.coli. When expressed in E.coli complements a secB deletion, restores export of OmpA and MBP and inhibits aggregation of proOmpC although it is less efficient than endogenous SecB. Complements the general chaperone function of E.coli SecB less well. The protein is SecB-like chaperone Rv1957 (secBL) of Mycobacterium tuberculosis (strain ATCC 25618 / H37Rv).